We begin with the raw amino-acid sequence, 174 residues long: Shikimate kinase 2 (174 aa).

12–17 is a binding site for ATP; it reads GAGKTT. Mg(2+) is bound by residues T16 and D32. The substrate site is built by D34, R58, and G79. Residues 112-126 form an LID domain region; sequence AEDPEDAQRPSLTGK. Position 120 (R120) interacts with ATP. Residue R139 coordinates substrate. Q155 contributes to the ATP binding site.

It belongs to the shikimate kinase family. AroL subfamily. As to quaternary structure, monomer. The cofactor is Mg(2+).

The protein resides in the cytoplasm. The enzyme catalyses shikimate + ATP = 3-phosphoshikimate + ADP + H(+). Its pathway is metabolic intermediate biosynthesis; chorismate biosynthesis; chorismate from D-erythrose 4-phosphate and phosphoenolpyruvate: step 5/7. Catalyzes the specific phosphorylation of the 3-hydroxyl group of shikimic acid using ATP as a cosubstrate. This is Shikimate kinase 2 from Yersinia enterocolitica serotype O:8 / biotype 1B (strain NCTC 13174 / 8081).